Here is a 716-residue protein sequence, read N- to C-terminus: MGWLPLLLLLVQCSRALGQRSPLNDFQLFRGTELRNLLHTAVPGPWQEDVADAEECARRCGPLLDCRAFHYNMSSHGCQLLPWTQHSLHTQLYHSSLCHLFQKKDYVRTCIMDNGVSYRGTVARTAGGLPCQAWSRRFPNDHKYTPTPKNGLEENFCRNPDGDPRGPWCYTTNRSVRFQSCGIKTCREAVCVLCNGEDYRGEVDVTESGRECQRWDLQHPHSHPFQPEKFLDKDLKDNYCRNPDGSERPWCYTTDPNVEREFCDLPSCGPNLPPTVKGSKSQRRNKGKALNCFRGKGEDYRGTTNTTSAGVPCQRWDAQSPHQHRFVPEKYACKDLRENFCRNPDGSEAPWCFTSRPGLRMAFCHQIPRCTEELVPEGCYHGSGEQYRGSVSKTRKGVQCQHWSSETPHKPQFTPTSAPQAGLEANFCRNPDGDSHGPWCYTLDPDILFDYCALQRCDDDQPPSILDPPDQVVFEKCGKRVDKSNKLRVVGGHPGNSPWTVSLRNRQGQHFCGGSLVKEQWVLTARQCIWSCHEPLTGYEVWLGTINQNPQPGEANLQRVPVAKAVCGPAGSQLVLLKLERPVILNHHVALICLPPEQYVVPPGTKCEIAGWGESIGTSNNTVLHVASMNVISNQECNTKYRGHIQESEICTQGLVVPVGACEGDYGGPLACYTHDCWVLQGLIIPNRVCARPRWPAIFTRVSVFVDWINKVMQLE.

Residues 1–18 (MGWLPLLLLLVQCSRALG) form the signal peptide. One can recognise a PAN domain in the interval 19 to 105 (QRSPLNDFQL…SLCHLFQKKD (87 aa)). 20 disulfides stabilise this stretch: Cys56/Cys78, Cys60/Cys66, Cys110/Cys186, Cys131/Cys169, Cys157/Cys181, Cys191/Cys268, Cys194/Cys333, Cys212/Cys251, Cys240/Cys263, Cys292/Cys370, Cys313/Cys352, Cys341/Cys364, Cys379/Cys457, Cys400/Cys440, Cys428/Cys452, Cys477/Cys593, Cys512/Cys528, Cys607/Cys672, Cys637/Cys651, and Cys662/Cys690. Asn72 carries an N-linked (GlcNAc...) asparagine glycan. Kringle domains follow at residues 110 to 186 (CIMD…IKTC), 191 to 268 (CVLC…LPSC), 292 to 370 (CFRG…IPRC), and 379 to 457 (CYHG…LQRC). Residue Asn173 is glycosylated (N-linked (GlcNAc...) asparagine). The N-linked (GlcNAc...) asparagine glycan is linked to Asn305. The 226-residue stretch at 489-714 (VVGGHPGNSP…FVDWINKVMQ (226 aa)) folds into the Peptidase S1 domain. Asn620 is a glycosylation site (N-linked (GlcNAc...) asparagine).

Belongs to the peptidase S1 family. Plasminogen subfamily. As to quaternary structure, dimer of an alpha chain and a beta chain linked by a disulfide bond. Interacts (via beta chain) with MST1R (via SEMA domain). Cleaved after Arg-488, probably by HPN/Hepsin, to yield the active form consisting of two disulfide-linked chains. In terms of tissue distribution, liver. Lower levels in lung, placenta and adrenal.

Its subcellular location is the secreted. The chain is Hepatocyte growth factor-like protein (Mst1) from Mus musculus (Mouse).